The following is a 313-amino-acid chain: Proline-rich protein 3 (313 aa).

Residues 1–22 (MAITRSSLAICLILSLVTITTA) form the signal peptide. The tract at residues 27–312 (PSSPPVYKSP…GPKAAPATPK (286 aa)) is 35 X 5 AA approximate repeats. 35 consecutive repeat copies span residues 30–34 (PPVYK), 35–39 (SPEHK), 40–43 (PTLP), 44–48 (SPVYT), 49–53 (PPVYK), 54–57 (PTLS), 58–62 (PPVYT), 64–67 (PTIP), 68–72 (PPVYT), 73–77 (PPVYK), 82–86 (PPVYT), 87–91 (KPTIP), 92–96 (PPVYT), 97–101 (PPVYK), 102–105 (PTLS), 106–110 (PPVYT), 111–115 (KPTIP), 116–120 (PPVYT), 121–125 (PPVYK), 126–131 (PTPVYT), 132–136 (KPTIP), 137–141 (PPVYT), 142–146 (PPVYK), 147–150 (PTPS), 151–155 (PPVYK), 157–163 (SPSYSSP), 164–168 (PPPYV), 169–174 (PKPTYT), 175–181 (PTTKPYV), 182–186 (PEILK), 187–229 (AVDG…VIYS), 258–262 (SPVET), 266–270 (PTNVN), 298–302 (PFYYT), and 308–312 (PATPK).

It belongs to the plant proline-rich protein superfamily. ENOD12 family. In terms of tissue distribution, exclusively expressed in roots, particularly in root hairs-containing regions, and especially in root hairs.

It is found in the secreted. It localises to the cell wall. Functionally, may contribute to cell wall structure in root hairs. The polypeptide is Proline-rich protein 3 (PRP3) (Arabidopsis thaliana (Mouse-ear cress)).